The chain runs to 526 residues: Peptide chain release factor 3 (526 aa).

The tr-type G domain occupies 9–277; the sequence is DKRRTFAIIS…GIVEWAPKPL (269 aa). GTP contacts are provided by residues 18–25, 86–90, and 140–143; these read SHPDAGKT, DTPGH, and NKLD.

Belongs to the TRAFAC class translation factor GTPase superfamily. Classic translation factor GTPase family. PrfC subfamily.

Its subcellular location is the cytoplasm. Functionally, increases the formation of ribosomal termination complexes and stimulates activities of RF-1 and RF-2. It binds guanine nucleotides and has strong preference for UGA stop codons. It may interact directly with the ribosome. The stimulation of RF-1 and RF-2 is significantly reduced by GTP and GDP, but not by GMP. This chain is Peptide chain release factor 3, found in Shewanella putrefaciens (strain CN-32 / ATCC BAA-453).